The following is a 55-amino-acid chain: Large ribosomal subunit protein bL33 (55 aa).

It belongs to the bacterial ribosomal protein bL33 family.

The sequence is that of Large ribosomal subunit protein bL33 from Methylobacterium sp. (strain 4-46).